The following is a 412-amino-acid chain: Divalent metal cation transporter MntH (412 aa).

11 helical membrane-spanning segments follow: residues L19–A39, A46–I66, V94–I114, L122–I142, V156–Q176, A196–H216, I241–F261, I290–G310, I322–G342, I348–L368, and A392–L412.

The protein belongs to the NRAMP family.

The protein resides in the cell inner membrane. In terms of biological role, h(+)-stimulated, divalent metal cation uptake system. The sequence is that of Divalent metal cation transporter MntH from Cronobacter sakazakii (strain ATCC BAA-894) (Enterobacter sakazakii).